Reading from the N-terminus, the 596-residue chain is PDZ and LIM domain protein 5 (596 aa).

N-acetylserine is present on Ser-2. Ser-2 is modified (phosphoserine). Residues 2 to 85 (SNYSVSLVGP…SLNMTLQRAS (84 aa)) enclose the PDZ domain. Lys-89 carries the post-translational modification N6-acetyllysine; alternate. Position 89 is an N6-succinyllysine; alternate (Lys-89). Lys-89 participates in a covalent cross-link: Glycyl lysine isopeptide (Lys-Gly) (interchain with G-Cter in SUMO2); alternate. Phosphoserine occurs at positions 111, 134, and 137. 3 disordered regions span residues 121–165 (NNMA…SPSP), 196–240 (AGKT…GPPR), and 255–340 (THSD…RPGV). Residues 134-143 (SVSSPKVTSI) show a composition bias toward polar residues. Over residues 144 to 165 (PSPSSAFTPAHATTSSHASPSP) the composition is skewed to low complexity. 2 stretches are compositionally biased toward polar residues: residues 205–219 (RQPT…TSQE) and 226–237 (RGSQGDSKQQNG). Phosphoserine is present on residues Ser-228 and Ser-260. Basic and acidic residues-rich tracts occupy residues 258-273 (DASK…DWRP) and 293-304 (EHLKESEADNTK). A compositionally biased stretch (polar residues) spans 305 to 335 (KANNSQEPSPQLASSVASTRSMPESLDSPTS). Ser-309, Ser-313, and Ser-322 each carry phosphoserine. The residue at position 350 (Lys-350) is an N6-acetyllysine. Residues 354–381 (STGVIKSPSWQRPNQGVPSTGRISNSAT) are disordered. 2 positions are modified to phosphoserine: Ser-360 and Ser-362. Positions 361-381 (PSWQRPNQGVPSTGRISNSAT) are enriched in polar residues. LIM zinc-binding domains follow at residues 418 to 477 (PMCA…FFAP), 477 to 536 (PECG…LFGT), and 536 to 596 (TICH…SVNF).

As to quaternary structure, interacts with various PKC isoforms through the LIM domains. Interacts with actin and alpha-actinin through the PDZ domain. Interacts (via LIM domains) with SIPA1L1/SPAR; this interaction may occur preferentially with isoform 1. As to expression, heart and skeletal muscle specific. Expression is commonly increased in the brain of patients with bipolar disorder, schizophrenia, and major depression.

The protein localises to the postsynaptic density. The protein resides in the presynapse. It localises to the postsynapse. It is found in the cytoplasm. Its subcellular location is the cytosol. Its function is as follows. May play an important role in the heart development by scaffolding PKC to the Z-disk region. May play a role in the regulation of cardiomyocyte expansion. Isoforms lacking the LIM domains may negatively modulate the scaffolding activity of isoform 1. Overexpression promotes the development of heart hypertrophy. Contributes to the regulation of dendritic spine morphogenesis in neurons. May be required to restrain postsynaptic growth of excitatory synapses. Isoform 1, but not isoform 2, expression favors spine thinning and elongation. The sequence is that of PDZ and LIM domain protein 5 from Homo sapiens (Human).